Reading from the N-terminus, the 158-residue chain is NAD(P)H-quinone oxidoreductase subunit J, chloroplastic (158 aa).

The protein belongs to the complex I 30 kDa subunit family. NDH is composed of at least 16 different subunits, 5 of which are encoded in the nucleus.

The protein localises to the plastid. It localises to the chloroplast thylakoid membrane. The catalysed reaction is a plastoquinone + NADH + (n+1) H(+)(in) = a plastoquinol + NAD(+) + n H(+)(out). The enzyme catalyses a plastoquinone + NADPH + (n+1) H(+)(in) = a plastoquinol + NADP(+) + n H(+)(out). Its function is as follows. NDH shuttles electrons from NAD(P)H:plastoquinone, via FMN and iron-sulfur (Fe-S) centers, to quinones in the photosynthetic chain and possibly in a chloroplast respiratory chain. The immediate electron acceptor for the enzyme in this species is believed to be plastoquinone. Couples the redox reaction to proton translocation, and thus conserves the redox energy in a proton gradient. This chain is NAD(P)H-quinone oxidoreductase subunit J, chloroplastic, found in Daucus carota (Wild carrot).